The chain runs to 418 residues: Serine hydroxymethyltransferase (418 aa).

(6S)-5,6,7,8-tetrahydrofolate-binding positions include L121 and 125–127 (GHL). An N6-(pyridoxal phosphate)lysine modification is found at K230. Position 355-357 (355-357 (SPF)) interacts with (6S)-5,6,7,8-tetrahydrofolate.

This sequence belongs to the SHMT family. Homodimer. The cofactor is pyridoxal 5'-phosphate.

Its subcellular location is the cytoplasm. It carries out the reaction (6R)-5,10-methylene-5,6,7,8-tetrahydrofolate + glycine + H2O = (6S)-5,6,7,8-tetrahydrofolate + L-serine. Its pathway is one-carbon metabolism; tetrahydrofolate interconversion. It participates in amino-acid biosynthesis; glycine biosynthesis; glycine from L-serine: step 1/1. In terms of biological role, catalyzes the reversible interconversion of serine and glycine with tetrahydrofolate (THF) serving as the one-carbon carrier. This reaction serves as the major source of one-carbon groups required for the biosynthesis of purines, thymidylate, methionine, and other important biomolecules. Also exhibits THF-independent aldolase activity toward beta-hydroxyamino acids, producing glycine and aldehydes, via a retro-aldol mechanism. The polypeptide is Serine hydroxymethyltransferase (Streptococcus agalactiae serotype III (strain NEM316)).